Here is a 508-residue protein sequence, read N- to C-terminus: MIISPGTMRLADWRAVQEGDAARLDAGCRAAVEAAAGCVAAILERDEAVYGINTGFGRLASTRIEPADLATLQRNLVLSHAAGVGEALPAPIVRMVIALKLASLARGASGVRWETIEALQGLLDHDILPVIPAQGSVGASGDLAPLAHMTCALLGIGEVLGAAGREDAAAALGRAGMAPLVLGPKEGLALLNGTQVSTAIALTGLFRAERLCRAALLTGALTTDAARGSDAPFDPRIHALRGHAGQMAVAAALRTLLAGSGIRDSHRIGDPRVQDPYSLRCQPQVMGAVFDLLGQAGRTLATEANGVSDNPLVFAETGEVISGGNFHAEYVAFAADQIALAIAEAGSLAERRIALLVDPAHSGLPAFLTRAPGLNSGYMIPQVTAAALVAENRMLAHPASVDSIPTSANQEDHVSMATHGAMRLLRMADNLSHVLAIEYLMAAQGIDLLAPLATSAPLGRMHAVLRESVPVLGEDRLMAPDIARARALIESGAAERAAGCDALPELDA.

A cross-link (5-imidazolinone (Ala-Gly)) is located at residues A139–G141. S140 is modified (2,3-didehydroalanine (Ser)).

This sequence belongs to the PAL/histidase family. Contains an active site 4-methylidene-imidazol-5-one (MIO), which is formed autocatalytically by cyclization and dehydration of residues Ala-Ser-Gly.

Its subcellular location is the cytoplasm. It catalyses the reaction L-histidine = trans-urocanate + NH4(+). Its pathway is amino-acid degradation; L-histidine degradation into L-glutamate; N-formimidoyl-L-glutamate from L-histidine: step 1/3. This is Histidine ammonia-lyase from Acidiphilium cryptum (strain JF-5).